Here is a 460-residue protein sequence, read N- to C-terminus: tRNA modification GTPase MnmE (460 aa).

Arg-22, Glu-83, and Lys-122 together coordinate (6S)-5-formyl-5,6,7,8-tetrahydrofolate. Residues 219–381 (GIKTLIIGRP…LQQTILKKFQ (163 aa)) form the TrmE-type G domain. Asn-229 is a binding site for K(+). Residues 229–234 (NVGKSS), 248–254 (SDISGTT), and 273–276 (DTAG) each bind GTP. Residue Ser-233 coordinates Mg(2+). K(+)-binding residues include Ser-248, Ile-250, and Thr-253. Thr-254 provides a ligand contact to Mg(2+). Lys-460 lines the (6S)-5-formyl-5,6,7,8-tetrahydrofolate pocket.

It belongs to the TRAFAC class TrmE-Era-EngA-EngB-Septin-like GTPase superfamily. TrmE GTPase family. Homodimer. Heterotetramer of two MnmE and two MnmG subunits. Requires K(+) as cofactor.

It localises to the cytoplasm. In terms of biological role, exhibits a very high intrinsic GTPase hydrolysis rate. Involved in the addition of a carboxymethylaminomethyl (cmnm) group at the wobble position (U34) of certain tRNAs, forming tRNA-cmnm(5)s(2)U34. This is tRNA modification GTPase MnmE from Aster yellows witches'-broom phytoplasma (strain AYWB).